The chain runs to 231 residues: Ion-translocating oxidoreductase complex subunit E (231 aa).

The next 6 helical transmembrane spans lie at 18 to 38 (GLVQ…LTNA), 39 to 59 (LGLG…VSLV), 69 to 89 (IPVF…FINA), 93 to 113 (GLYL…VIIG), 127 to 147 (STFD…VLGA), and 182 to 202 (TFLL…LIAL).

Belongs to the NqrDE/RnfAE family. In terms of assembly, the complex is composed of six subunits: RnfA, RnfB, RnfC, RnfD, RnfE and RnfG.

It localises to the cell inner membrane. Its function is as follows. Part of a membrane-bound complex that couples electron transfer with translocation of ions across the membrane. The protein is Ion-translocating oxidoreductase complex subunit E of Shewanella piezotolerans (strain WP3 / JCM 13877).